We begin with the raw amino-acid sequence, 411 residues long: Argininosuccinate lyase (411 aa).

This sequence belongs to the lyase 1 family. Argininosuccinate lyase subfamily.

It is found in the cytoplasm. The enzyme catalyses 2-(N(omega)-L-arginino)succinate = fumarate + L-arginine. It functions in the pathway amino-acid biosynthesis; L-arginine biosynthesis; L-arginine from L-ornithine and carbamoyl phosphate: step 3/3. This Legionella pneumophila subsp. pneumophila (strain Philadelphia 1 / ATCC 33152 / DSM 7513) protein is Argininosuccinate lyase.